The primary structure comprises 391 residues: Transaldolase (391 aa).

Residue Lys-134 is the Schiff-base intermediate with substrate of the active site. EF-hand domains follow at residues 329 to 364 (TLTH…FDAL) and 365 to 387 (DANH…VLHL). Asp-342, Asp-344, Asp-346, Glu-353, Asp-365, Asn-367, Asp-369, Lys-371, and Asp-376 together coordinate Ca(2+).

The protein belongs to the transaldolase family. Type 1 subfamily.

Its subcellular location is the cytoplasm. It carries out the reaction D-sedoheptulose 7-phosphate + D-glyceraldehyde 3-phosphate = D-erythrose 4-phosphate + beta-D-fructose 6-phosphate. The protein operates within carbohydrate degradation; pentose phosphate pathway; D-glyceraldehyde 3-phosphate and beta-D-fructose 6-phosphate from D-ribose 5-phosphate and D-xylulose 5-phosphate (non-oxidative stage): step 2/3. Transaldolase is important for the balance of metabolites in the pentose-phosphate pathway. The protein is Transaldolase of Thermosynechococcus vestitus (strain NIES-2133 / IAM M-273 / BP-1).